Reading from the N-terminus, the 201-residue chain is Adenylyl-sulfate kinase (201 aa).

35-42 (GLSGSGKS) is an ATP binding site. The active-site Phosphoserine intermediate is the S109.

It belongs to the APS kinase family.

The catalysed reaction is adenosine 5'-phosphosulfate + ATP = 3'-phosphoadenylyl sulfate + ADP + H(+). The protein operates within sulfur metabolism; hydrogen sulfide biosynthesis; sulfite from sulfate: step 2/3. Catalyzes the synthesis of activated sulfate. In Enterobacter sp. (strain 638), this protein is Adenylyl-sulfate kinase.